The primary structure comprises 100 residues: NADH-quinone oxidoreductase subunit K (100 aa).

3 consecutive transmembrane segments (helical) span residues 3–23 (LNAY…GIFL), 29–49 (ISIM…FVAF), and 60–80 (IFTF…LAIL).

It belongs to the complex I subunit 4L family. NDH-1 is composed of 14 different subunits. Subunits NuoA, H, J, K, L, M, N constitute the membrane sector of the complex.

The protein resides in the cell inner membrane. It catalyses the reaction a quinone + NADH + 5 H(+)(in) = a quinol + NAD(+) + 4 H(+)(out). In terms of biological role, NDH-1 shuttles electrons from NADH, via FMN and iron-sulfur (Fe-S) centers, to quinones in the respiratory chain. The immediate electron acceptor for the enzyme in this species is believed to be ubiquinone. Couples the redox reaction to proton translocation (for every two electrons transferred, four hydrogen ions are translocated across the cytoplasmic membrane), and thus conserves the redox energy in a proton gradient. This Magnetococcus marinus (strain ATCC BAA-1437 / JCM 17883 / MC-1) protein is NADH-quinone oxidoreductase subunit K.